A 582-amino-acid chain; its full sequence is Proline--tRNA ligase (582 aa).

It belongs to the class-II aminoacyl-tRNA synthetase family. ProS type 1 subfamily. Homodimer.

It is found in the cytoplasm. The enzyme catalyses tRNA(Pro) + L-proline + ATP = L-prolyl-tRNA(Pro) + AMP + diphosphate. Its function is as follows. Catalyzes the attachment of proline to tRNA(Pro) in a two-step reaction: proline is first activated by ATP to form Pro-AMP and then transferred to the acceptor end of tRNA(Pro). As ProRS can inadvertently accommodate and process non-cognate amino acids such as alanine and cysteine, to avoid such errors it has two additional distinct editing activities against alanine. One activity is designated as 'pretransfer' editing and involves the tRNA(Pro)-independent hydrolysis of activated Ala-AMP. The other activity is designated 'posttransfer' editing and involves deacylation of mischarged Ala-tRNA(Pro). The misacylated Cys-tRNA(Pro) is not edited by ProRS. This is Proline--tRNA ligase from Mycobacterium avium (strain 104).